Consider the following 80-residue polypeptide: Conotoxin Cl10.1 (80 aa).

The first 20 residues, 1 to 20, serve as a signal peptide directing secretion; the sequence is MTTLGMTMLVLLLLLPLATC. Residues 21–36 constitute a propeptide that is removed on maturation; the sequence is LGDGERSPWDSLLRAL.

Post-translationally, contains 4 disulfide bonds. As to expression, expressed by the venom duct.

The protein localises to the secreted. In Californiconus californicus (California cone), this protein is Conotoxin Cl10.1.